Here is a 447-residue protein sequence, read N- to C-terminus: Alkylglycerol monooxygenase (447 aa).

The next 2 membrane-spanning stretches (helical) occupy residues Ala43–Gly63 and Trp111–Phe131. The Fatty acid hydroxylase domain occupies Tyr118 to Thr249. The Histidine box-1 motif lies at His132 to His136. Residues His145–His149 carry the Histidine box-2 motif. The helical transmembrane segment at Ser170 to Ile190 threads the bilayer. The short motif at His221–His225 is the Histidine box-3 element. 3 helical membrane passes run Phe334–Phe354, Val363–Leu383, and Ile413–Val433.

The protein belongs to the sterol desaturase family. TMEM195 subfamily. Requires Fe cation as cofactor.

It localises to the endoplasmic reticulum membrane. The enzyme catalyses 1-O-(1,2-saturated-alkyl)-sn-glycerol + (6R)-L-erythro-5,6,7,8-tetrahydrobiopterin + O2 = a 1-(1-hydroxyalkyl)-sn-glycerol + (6R)-L-erythro-6,7-dihydrobiopterin + H2O. Glyceryl-ether monooxygenase that cleaves the O-alkyl bond of ether lipids. Ether lipids are essential components of brain membranes. The protein is Alkylglycerol monooxygenase (Agmo) of Rattus norvegicus (Rat).